The chain runs to 350 residues: Secreted effector protein PipB2 (350 aa).

Pentapeptide repeat domains are found at residues 162–201, 202–241, 247–286, and 287–326; these read ANLT…NLSG, TSLG…SLLG, CNCS…IMED, and AVLT…TLTH.

As to quaternary structure, interacts with the host kinesin light chain (KLC), a subunit of the kinesin-1 motor complex.

The protein localises to the secreted. It localises to the host membrane. Effector proteins function to alter host cell physiology and promote bacterial survival in host tissues. Involved in the reorganization of late endosome/lysosome (LE/Lys) compartments in mammalian cells. Necessary and sufficient to link kinesin-1 onto the Salmonella-containing vacuole (SCV) membrane. Required for centrifugal extension of lysosomal glycoprotein-rich membrane tubules, known as Salmonella-induced filaments (Sifs), away from the SCV and toward the cell periphery. Required for virulence, but not for intracellular survival and replication in phagocytic cells. This is Secreted effector protein PipB2 (pipB2) from Salmonella paratyphi A (strain ATCC 9150 / SARB42).